Reading from the N-terminus, the 1026-residue chain is Cadherin-like and PC-esterase domain-containing protein 1 (1026 aa).

Residues 1–34 (MVCRPVFPCRRRFCPRPFLVGLVVAICLFYQTLT) form the signal peptide. N-linked (GlcNAc...) asparagine glycans are attached at residues Asn-251, Asn-404, Asn-413, Asn-737, Asn-791, and Asn-985.

This sequence belongs to the PC-esterase family.

The polypeptide is Cadherin-like and PC-esterase domain-containing protein 1 (CPED1) (Homo sapiens (Human)).